A 449-amino-acid polypeptide reads, in one-letter code: Hyaluronidase-1 (449 aa).

An N-terminal signal peptide occupies residues 1–23; sequence MYHIWIKFLAAWIFLKRFNGVHV. Cystine bridges form between C47-C340 and C211-C227. N67, N103, and N111 each carry an N-linked (GlcNAc...) asparagine glycan. The Proton donor role is filled by E135. N153 carries an N-linked (GlcNAc...) asparagine glycan. N357 carries N-linked (GlcNAc...) asparagine glycosylation. Intrachain disulfides connect C365/C376, C370/C427, and C429/C438. N-linked (GlcNAc...) asparagine glycosylation occurs at N401. Residues 427–438 form the EGF-like domain; it reads CQCYQGWKGLYC.

This sequence belongs to the glycosyl hydrolase 56 family. In terms of assembly, monomer. In terms of tissue distribution, expressed by the venom gland.

It localises to the secreted. The catalysed reaction is Random hydrolysis of (1-&gt;4)-linkages between N-acetyl-beta-D-glucosamine and D-glucuronate residues in hyaluronate.. Functionally, snake venom endo-hyaluronidase that degrades hyaluronan to smaller oligosaccharide fragments. In venom, it is not toxic by itself, but increases the diffusion of other venom proteins by degrading the extracellular matrix. In addition, it displays antiedematogenic activity. The chain is Hyaluronidase-1 from Cerastes cerastes (Horned desert viper).